Reading from the N-terminus, the 138-residue chain is Host cell factor C1 regulator 1 (138 aa).

The tract at residues 76–79 (DHPY) is interaction with HCFC1. A Nuclear export signal motif is present at residues 110 to 119 (IPEALRLLRL).

In terms of assembly, interacts with HCFC1. As to expression, widely expressed.

The protein resides in the cytoplasm. It is found in the nucleus. Its function is as follows. Regulates HCFC1 activity by modulating its subcellular localization. Overexpression of HCFC1R1 leads to accumulation of HCFC1 in the cytoplasm. HCFC1R1-mediated export may provide the pool of cytoplasmic HCFC1 required for import of virion-derived VP16 into the nucleus. In Homo sapiens (Human), this protein is Host cell factor C1 regulator 1 (HCFC1R1).